The following is a 275-amino-acid chain: MESEKVVVDELPLAIVRRVVKKKLSECSPDYDVSIHKEALLAFSESARIFIHYLSATANDFCKDARRQTMKADDVFKALEEMDFSEFLEPLKSSLEDFKKKNAGKKAGAAAASYPAGGAALKSSSGTASKPKETKKRKQEEPSTQKGARKSKIDEETKRNDEETENDNTEEENGNDEEDENGNDEEDENDDENTEENGNDEENDDENTEENGNDEENEKEDEENSMEENGNESEESGNEDHSMEENGSGVGEDNENEDGSVSGSGEEVESDEEDE.

The DNA-binding element occupies 11-17 (LPLAIVR). Low complexity predominate over residues 112–122 (ASYPAGGAALK). The disordered stretch occupies residues 112–275 (ASYPAGGAAL…EEVESDEEDE (164 aa)). A Nuclear localization signal motif is present at residues 135 to 142 (KKRKQEEP). The segment covering 151–161 (SKIDEETKRND) has biased composition (basic and acidic residues). A coiled-coil region spans residues 152-179 (KIDEETKRNDEETENDNTEEENGNDEED). Acidic residues-rich tracts occupy residues 162–237 (EETE…EESG) and 266–275 (EEVESDEEDE).

It belongs to the NFYB/HAP3 subunit family. Heterotrimeric transcription factor composed of three components, NF-YA, NF-YB and NF-YC. NF-YB and NF-YC must interact and dimerize for NF-YA association and DNA binding. Binds directly with DPB3-1.

The protein resides in the nucleus. Its function is as follows. Component of the NF-Y/HAP transcription factor complex. The NF-Y complex stimulates the transcription of various genes by recognizing and binding to a CCAAT motif in promoters. The protein is DNA polymerase II subunit B4 of Arabidopsis thaliana (Mouse-ear cress).